The following is a 337-amino-acid chain: Monoacylglycerol lipase abhd6-A (337 aa).

Residues 1–19 lie on the Extracellular side of the membrane; the sequence is MDLDVLNMFLVAGGTLLVP. A helical; Signal-anchor for type II membrane protein membrane pass occupies residues 20 to 42; the sequence is ILAFVTSFLLWPAALIKIYYWYW. Topologically, residues 43-337 are cytoplasmic; sequence RRALGMQVKF…QSTENNKKHE (295 aa). An AB hydrolase-1 domain is found at 73–313; sequence SVLMLHGFSA…CGHSVVMERP (241 aa). The Nucleophile role is filled by Ser148. Active-site charge relay system residues include Asp278 and His306.

The protein belongs to the AB hydrolase superfamily.

It localises to the late endosome membrane. The protein localises to the lysosome membrane. Its subcellular location is the mitochondrion membrane. The catalysed reaction is Hydrolyzes glycerol monoesters of long-chain fatty acids.. It carries out the reaction 1-octanoylglycerol + H2O = octanoate + glycerol + H(+). It catalyses the reaction 1-decanoylglycerol + H2O = decanoate + glycerol + H(+). The enzyme catalyses 1-dodecanoylglycerol + H2O = dodecanoate + glycerol + H(+). The catalysed reaction is 1-tetradecanoylglycerol + H2O = tetradecanoate + glycerol + H(+). It carries out the reaction 2-hexadecanoylglycerol + H2O = glycerol + hexadecanoate + H(+). It catalyses the reaction 2-(9Z-octadecenoyl)-glycerol + H2O = glycerol + (9Z)-octadecenoate + H(+). The enzyme catalyses 1-(9Z-octadecenoyl)-glycerol + H2O = glycerol + (9Z)-octadecenoate + H(+). The catalysed reaction is 2-(9Z,12Z-octadecadienoyl)-glycerol + H2O = (9Z,12Z)-octadecadienoate + glycerol + H(+). It carries out the reaction 2-(5Z,8Z,11Z,14Z-eicosatetraenoyl)-glycerol + H2O = glycerol + (5Z,8Z,11Z,14Z)-eicosatetraenoate + H(+). It catalyses the reaction 1-(5Z,8Z,11Z,14Z-eicosatetraenoyl)-glycerol + H2O = glycerol + (5Z,8Z,11Z,14Z)-eicosatetraenoate + H(+). The enzyme catalyses 1-(9Z,12Z-octadecadienoyl)-glycerol + H2O = (9Z,12Z)-octadecadienoate + glycerol + H(+). The catalysed reaction is 3-(9Z-octadecenoyl)-sn-glycero-1-phospho-(3'-(9Z-octadecenoyl)-1'-sn-glycerol) + H2O = 3-(9Z-octadecenoyl)-sn-glycero-1-phospho-(1'-sn-glycerol) + (9Z)-octadecenoate + H(+). It carries out the reaction (S,S)-2-(9Z-octadecenoyl)-sn-glycero-1-phospho-(2'-(9Z-octadecenoyl)-1'-sn-glycerol) + H2O = (S,S)-2-(9Z-octadecenoyl)-sn-glycero-1-phospho-(1'-sn-glycerol) + (9Z)-octadecenoate + H(+). It catalyses the reaction (R,R)-2-(9Z-octadecenoyl)-sn-glycero-3-phospho-(2'-(9Z-octadecenoyl)-3'-sn-glycerol) + H2O = (R,R)-2-(9Z-octadecenoyl)-sn-glycero-3-phospho-(3'-sn-glycerol) + (9Z)-octadecenoate + H(+). Its function is as follows. Lipase that preferentially hydrolysis medium-chain saturated monoacylglycerols including 2-arachidonoylglycerol. Through 2-arachidonoylglycerol degradation may regulate endocannabinoid signaling pathways. Also has a lysophosphatidyl lipase activity with a preference for lysophosphatidylglycerol among other lysophospholipids. Also able to degrade bis(monoacylglycero)phosphate (BMP) and constitutes the major enzyme for BMP catabolism. BMP, also known as lysobisphosphatidic acid, is enriched in late endosomes and lysosomes and plays a key role in the formation of intraluminal vesicles and in lipid sorting. This is Monoacylglycerol lipase abhd6-A (abhd6-a) from Xenopus laevis (African clawed frog).